A 203-amino-acid chain; its full sequence is dATP triphosphohydrolase (203 aa).

Arg-17 provides a ligand contact to dATP. Co(2+) is bound by residues His-31, His-73, Asp-74, Glu-77, Asp-82, and Asp-130.

This sequence belongs to the Caudovirales dATP triphosphohydrolase family. Requires Co(2+) as cofactor.

The catalysed reaction is dATP + H2O = 2'-deoxyadenosine + triphosphate + H(+). It catalyses the reaction dADP + H2O = 2'-deoxyadenosine + diphosphate. The enzyme catalyses dAMP + H2O = 2'-deoxyadenosine + phosphate. Its function is as follows. Catalyzes the hydrolysis of dATP, dADP and dAMP into dA. This step is essential for Z-genome synthesis (containing aminoadenine instead of adenine). Specifically removes dATP and its precursor dADP from the nucleotide pool of the host, preventing the incorporation of A into the phage genome and favoring the integration of the Z-base into the viral genome. The polypeptide is dATP triphosphohydrolase (datZ) (Acinetobacter phage SH-Ab 15497).